Here is a 1427-residue protein sequence, read N- to C-terminus: DNA-directed RNA polymerase subunit beta' (1427 aa).

Zn(2+) contacts are provided by Cys-70, Cys-72, Cys-85, and Cys-88. Mg(2+)-binding residues include Asp-461, Asp-463, and Asp-465. Positions 809, 882, 889, and 892 each coordinate Zn(2+). Positions Glu-1394–Glu-1427 are disordered. The span at Val-1417–Glu-1427 shows a compositional bias: basic and acidic residues.

It belongs to the RNA polymerase beta' chain family. In terms of assembly, the RNAP catalytic core consists of 2 alpha, 1 beta, 1 beta' and 1 omega subunit. When a sigma factor is associated with the core the holoenzyme is formed, which can initiate transcription. Mg(2+) is required as a cofactor. Requires Zn(2+) as cofactor.

The catalysed reaction is RNA(n) + a ribonucleoside 5'-triphosphate = RNA(n+1) + diphosphate. DNA-dependent RNA polymerase catalyzes the transcription of DNA into RNA using the four ribonucleoside triphosphates as substrates. This chain is DNA-directed RNA polymerase subunit beta', found in Sphingopyxis alaskensis (strain DSM 13593 / LMG 18877 / RB2256) (Sphingomonas alaskensis).